The primary structure comprises 212 residues: MIIAIDGPAASGKGTLAKRLAAHYGFRYLDTGVIYRAVAKAMLDAGADLTDEARAAEVARTLDPSRFDDPALKSHAVGEAASVVSAHPQVRAALVEFQKTFAAAPPGAVLDGRDIGTVICPDAEVKIFVVASPEVRAHRRFLEAQSRGEPADEAVILSDIVKRDERDKNRSAAPLKQAPDAVLLDNSYLDIEGGVRAAIDIVEAVRAGRRRV.

7-15 (GPAASGKGT) contacts ATP.

This sequence belongs to the cytidylate kinase family. Type 1 subfamily.

It is found in the cytoplasm. It catalyses the reaction CMP + ATP = CDP + ADP. The catalysed reaction is dCMP + ATP = dCDP + ADP. This Rhodopseudomonas palustris (strain ATCC BAA-98 / CGA009) protein is Cytidylate kinase.